The primary structure comprises 339 residues: Ketol-acid reductoisomerase (NADP(+)) (339 aa).

Residues Met1–Thr182 enclose the KARI N-terminal Rossmann domain. Residues Tyr24–Gln27, Lys48, Ser51, Thr53, and Asp83–Gln86 contribute to the NADP(+) site. His108 is a catalytic residue. Position 134 (Gly134) interacts with NADP(+). Positions Asn183–Ile328 constitute a KARI C-terminal knotted domain. Mg(2+) contacts are provided by Asp191, Glu195, Glu227, and Glu231. Position 252 (Ser252) interacts with substrate.

This sequence belongs to the ketol-acid reductoisomerase family. Requires Mg(2+) as cofactor.

It carries out the reaction (2R)-2,3-dihydroxy-3-methylbutanoate + NADP(+) = (2S)-2-acetolactate + NADPH + H(+). The enzyme catalyses (2R,3R)-2,3-dihydroxy-3-methylpentanoate + NADP(+) = (S)-2-ethyl-2-hydroxy-3-oxobutanoate + NADPH + H(+). Its pathway is amino-acid biosynthesis; L-isoleucine biosynthesis; L-isoleucine from 2-oxobutanoate: step 2/4. It participates in amino-acid biosynthesis; L-valine biosynthesis; L-valine from pyruvate: step 2/4. Involved in the biosynthesis of branched-chain amino acids (BCAA). Catalyzes an alkyl-migration followed by a ketol-acid reduction of (S)-2-acetolactate (S2AL) to yield (R)-2,3-dihydroxy-isovalerate. In the isomerase reaction, S2AL is rearranged via a Mg-dependent methyl migration to produce 3-hydroxy-3-methyl-2-ketobutyrate (HMKB). In the reductase reaction, this 2-ketoacid undergoes a metal-dependent reduction by NADPH to yield (R)-2,3-dihydroxy-isovalerate. This is Ketol-acid reductoisomerase (NADP(+)) from Rhizobium meliloti (strain 1021) (Ensifer meliloti).